A 103-amino-acid polypeptide reads, in one-letter code: Large ribosomal subunit protein P1 (103 aa).

Positions 66–103 (PAAGAPAAGAAGGAVEEKKEEKKAESEDESDDDMGLFD) are disordered. The span at 80–90 (VEEKKEEKKAE) shows a compositional bias: basic and acidic residues. The span at 91–103 (SEDESDDDMGLFD) shows a compositional bias: acidic residues.

It belongs to the eukaryotic ribosomal protein P1/P2 family. P1 and P2 exist as dimers at the large ribosomal subunit.

Functionally, plays an important role in the elongation step of protein synthesis. The protein is Large ribosomal subunit protein P1 of Polyorchis penicillatus (Hydromedusa).